A 339-amino-acid chain; its full sequence is Cyclic AMP-dependent transcription factor ATF-4 (339 aa).

Disordered regions lie at residues G14–L62, P153–V182, and Q209–D313. Residues V35–S55 show a composition bias toward low complexity. A compositionally biased stretch (pro residues) spans S162–E173. Positions I211 to S226 are enriched in low complexity. Over residues S231–P247 the composition is skewed to basic and acidic residues. Residues V266–M329 enclose the bZIP domain. Residues K268–R288 are basic motif. The segment at L294–L322 is leucine-zipper. Residues E300 to D313 are compositionally biased toward basic and acidic residues.

This sequence belongs to the bZIP family. Binds DNA as a homodimer and as a heterodimer.

The protein resides in the nucleus. Transcription factor that binds the cAMP response element (CRE) (consensus: 5'-GTGACGT[AC][AG]-3') and displays two biological functions, as regulator of metabolic and redox processes under normal cellular conditions, and as master transcription factor during integrated stress response (ISR). Binds to asymmetric CRE's as a heterodimer and to palindromic CRE's as a homodimer. Core effector of the ISR, which is required for adaptation to various stress such as endoplasmic reticulum (ER) stress, amino acid starvation, mitochondrial stress or oxidative stress. During ISR, atf4 translation is induced via an alternative ribosome translation re-initiation mechanism in response to eif2s1/eIF-2-alpha phosphorylation, and stress-induced atf4 acts as a master transcription factor of stress-responsive genes in order to promote cell recovery. Promotes the transcription of genes linked to amino acid sufficiency and resistance to oxidative stress to protect cells against metabolic consequences of ER oxidation. In the absence of stress, atf4 translation is at low levels and it is required for normal metabolic processes such as embryonic lens formation, fetal liver hematopoiesis, bone development and synaptic plasticity. Acts as a regulator of osteoblast differentiation by promoting expression of osteoblast-specific genes. Regulates the circadian expression of the core clock components. Mainly acts as a transcriptional activator in cellular stress adaptation, but it can also act as a transcriptional repressor. The polypeptide is Cyclic AMP-dependent transcription factor ATF-4 (atf4) (Danio rerio (Zebrafish)).